The primary structure comprises 168 residues: CDP-archaeol synthase (168 aa).

5 helical membrane passes run 7–27, 55–75, 80–100, 109–129, and 130–150; these read PLESILAIIPALAANGAPVLL, GLATGILYGSVIALLAASATC, YAAGVFASIGAMLGDMLGAFI, GAPAPLLDQLDFYSGALLALY, and AAGYVVHPAVALTFTPIVIAL.

The protein belongs to the CDP-archaeol synthase family. Mg(2+) is required as a cofactor.

It localises to the cell membrane. It carries out the reaction 2,3-bis-O-(geranylgeranyl)-sn-glycerol 1-phosphate + CTP + H(+) = CDP-2,3-bis-O-(geranylgeranyl)-sn-glycerol + diphosphate. It participates in membrane lipid metabolism; glycerophospholipid metabolism. In terms of biological role, catalyzes the formation of CDP-2,3-bis-(O-geranylgeranyl)-sn-glycerol (CDP-archaeol) from 2,3-bis-(O-geranylgeranyl)-sn-glycerol 1-phosphate (DGGGP) and CTP. This reaction is the third ether-bond-formation step in the biosynthesis of archaeal membrane lipids. The protein is CDP-archaeol synthase of Hyperthermus butylicus (strain DSM 5456 / JCM 9403 / PLM1-5).